The primary structure comprises 519 residues: Golgi-associated kinase 1B (519 aa).

Topologically, residues 1–37 are cytoplasmic; sequence MTCPDKPGQLINWFICSLCVPRVRKLWSSRRPRTRRN. A helical; Signal-anchor for type II membrane protein membrane pass occupies residues 38 to 55; sequence LLLGTACAIYLGFLVSQV. The Extracellular portion of the chain corresponds to 56–519; sequence GRASLQHGQA…HGVKVLPMNE (464 aa). The disordered stretch occupies residues 62–103; the sequence is HGQAAEKGPHRSRDTAEPSFPEIPLDGTLAPPESQGNGSTLQ. The segment covering 68–77 has biased composition (basic and acidic residues); that stretch reads KGPHRSRDTA. A glycan (N-linked (GlcNAc...) asparagine) is linked at N289.

It belongs to the GASK family.

The protein localises to the golgi apparatus membrane. The polypeptide is Golgi-associated kinase 1B (Homo sapiens (Human)).